The following is a 318-amino-acid chain: NAD kinase (318 aa).

The active-site Proton acceptor is the aspartate 84. NAD(+)-binding positions include 84–85 (DG), arginine 89, 159–160 (NE), arginine 170, aspartate 189, and 200–205 (TAYAFS).

This sequence belongs to the NAD kinase family. Requires a divalent metal cation as cofactor.

Its subcellular location is the cytoplasm. The enzyme catalyses NAD(+) + ATP = ADP + NADP(+) + H(+). In terms of biological role, involved in the regulation of the intracellular balance of NAD and NADP, and is a key enzyme in the biosynthesis of NADP. Catalyzes specifically the phosphorylation on 2'-hydroxyl of the adenosine moiety of NAD to yield NADP. This chain is NAD kinase, found in Cutibacterium acnes (strain DSM 16379 / KPA171202) (Propionibacterium acnes).